The following is a 141-amino-acid chain: Hemoglobin subunit alpha-1/2 (141 aa).

Residues 1–141 (VLSPADKKNV…VSTVLTSKYR (141 aa)) enclose the Globin domain. A Phosphoserine modification is found at Ser3. Lys7 and Lys11 each carry N6-succinyllysine. An N6-acetyllysine; alternate modification is found at Lys16. Position 16 is an N6-succinyllysine; alternate (Lys16). Tyr24 carries the post-translational modification Phosphotyrosine. At Ser35 the chain carries Phosphoserine. Lys40 bears the N6-succinyllysine mark. Ser49 bears the Phosphoserine mark. His58 serves as a coordination point for O2. Heme b is bound at residue His87. A Phosphoserine modification is found at Ser102. Position 108 is a phosphothreonine (Thr108). Phosphoserine is present on residues Ser124 and Ser131. Phosphothreonine is present on residues Thr134 and Thr137. Ser138 carries the post-translational modification Phosphoserine.

It belongs to the globin family. Heterotetramer of two alpha chains and two beta chains. In terms of tissue distribution, red blood cells.

Involved in oxygen transport from the lung to the various peripheral tissues. This Mandrillus sphinx (Mandrill) protein is Hemoglobin subunit alpha-1/2.